The chain runs to 766 residues: LPS-assembly protein LptD (766 aa).

Residues 1–18 (MNIRYLLLLSLMPHLVWA) form the signal peptide.

It belongs to the LptD family. Component of the lipopolysaccharide transport and assembly complex. Interacts with LptE and LptA.

The protein localises to the cell outer membrane. Functionally, together with LptE, is involved in the assembly of lipopolysaccharide (LPS) at the surface of the outer membrane. This Shewanella denitrificans (strain OS217 / ATCC BAA-1090 / DSM 15013) protein is LPS-assembly protein LptD.